The sequence spans 159 residues: NADH-quinone oxidoreductase subunit B (159 aa).

Residues cysteine 32, cysteine 33, cysteine 97, and cysteine 126 each contribute to the [4Fe-4S] cluster site.

The protein belongs to the complex I 20 kDa subunit family. In terms of assembly, NDH-1 is composed of 14 different subunits. Subunits NuoB, C, D, E, F, and G constitute the peripheral sector of the complex. [4Fe-4S] cluster is required as a cofactor.

Its subcellular location is the cell inner membrane. It catalyses the reaction a quinone + NADH + 5 H(+)(in) = a quinol + NAD(+) + 4 H(+)(out). Its function is as follows. NDH-1 shuttles electrons from NADH, via FMN and iron-sulfur (Fe-S) centers, to quinones in the respiratory chain. The immediate electron acceptor for the enzyme in this species is believed to be ubiquinone. Couples the redox reaction to proton translocation (for every two electrons transferred, four hydrogen ions are translocated across the cytoplasmic membrane), and thus conserves the redox energy in a proton gradient. This is NADH-quinone oxidoreductase subunit B from Helicobacter pylori (strain P12).